Reading from the N-terminus, the 82-residue chain is ATP synthase subunit c (82 aa).

2 helical membrane-spanning segments follow: residues 7–27 (AASVVAAGLAVGLGAIGPGIG) and 57–77 (FAFMESLTIYGLVVALVLLFA).

The protein belongs to the ATPase C chain family. F-type ATPases have 2 components, F(1) - the catalytic core - and F(0) - the membrane proton channel. F(1) has five subunits: alpha(3), beta(3), gamma(1), delta(1), epsilon(1). F(0) has four main subunits: a(1), b(1), b'(1) and c(10-14). The alpha and beta chains form an alternating ring which encloses part of the gamma chain. F(1) is attached to F(0) by a central stalk formed by the gamma and epsilon chains, while a peripheral stalk is formed by the delta, b and b' chains.

Its subcellular location is the cellular thylakoid membrane. Its function is as follows. F(1)F(0) ATP synthase produces ATP from ADP in the presence of a proton or sodium gradient. F-type ATPases consist of two structural domains, F(1) containing the extramembraneous catalytic core and F(0) containing the membrane proton channel, linked together by a central stalk and a peripheral stalk. During catalysis, ATP synthesis in the catalytic domain of F(1) is coupled via a rotary mechanism of the central stalk subunits to proton translocation. Functionally, key component of the F(0) channel; it plays a direct role in translocation across the membrane. A homomeric c-ring of between 10-14 subunits forms the central stalk rotor element with the F(1) delta and epsilon subunits. This Prochlorococcus marinus (strain NATL1A) protein is ATP synthase subunit c.